The following is a 504-amino-acid chain: Cytochrome P450 2D10 (504 aa).

S249 carries the post-translational modification Phosphoserine. Residue C446 participates in heme binding.

Belongs to the cytochrome P450 family. Heme is required as a cofactor.

The protein resides in the endoplasmic reticulum membrane. The protein localises to the microsome membrane. It catalyses the reaction an organic molecule + reduced [NADPH--hemoprotein reductase] + O2 = an alcohol + oxidized [NADPH--hemoprotein reductase] + H2O + H(+). In terms of biological role, cytochromes P450 are a group of heme-thiolate monooxygenases. In liver microsomes, this enzyme is involved in an NADPH-dependent electron transport pathway. It oxidizes a variety of structurally unrelated compounds, including steroids, fatty acids, and xenobiotics. This is Cytochrome P450 2D10 (Cyp2d10) from Mus musculus (Mouse).